We begin with the raw amino-acid sequence, 615 residues long: Elongation factor 4 (615 aa).

The tr-type G domain maps to alanine 14 to threonine 200. GTP-binding positions include aspartate 26–threonine 31 and asparagine 147–aspartate 150.

This sequence belongs to the TRAFAC class translation factor GTPase superfamily. Classic translation factor GTPase family. LepA subfamily.

Its subcellular location is the cell membrane. The enzyme catalyses GTP + H2O = GDP + phosphate + H(+). Its function is as follows. Required for accurate and efficient protein synthesis under certain stress conditions. May act as a fidelity factor of the translation reaction, by catalyzing a one-codon backward translocation of tRNAs on improperly translocated ribosomes. Back-translocation proceeds from a post-translocation (POST) complex to a pre-translocation (PRE) complex, thus giving elongation factor G a second chance to translocate the tRNAs correctly. Binds to ribosomes in a GTP-dependent manner. This chain is Elongation factor 4, found in Corynebacterium glutamicum (strain ATCC 13032 / DSM 20300 / JCM 1318 / BCRC 11384 / CCUG 27702 / LMG 3730 / NBRC 12168 / NCIMB 10025 / NRRL B-2784 / 534).